The chain runs to 166 residues: NAD(P)H-quinone oxidoreductase subunit I, chloroplastic (166 aa).

4Fe-4S ferredoxin-type domains lie at 55 to 84 and 95 to 124; these read GRIH…VDWK and LNYS…MTEE. Residues Cys-64, Cys-67, Cys-70, Cys-74, Cys-104, Cys-107, Cys-110, and Cys-114 each coordinate [4Fe-4S] cluster.

Belongs to the complex I 23 kDa subunit family. NDH is composed of at least 16 different subunits, 5 of which are encoded in the nucleus. It depends on [4Fe-4S] cluster as a cofactor.

It is found in the plastid. Its subcellular location is the chloroplast thylakoid membrane. It catalyses the reaction a plastoquinone + NADH + (n+1) H(+)(in) = a plastoquinol + NAD(+) + n H(+)(out). The catalysed reaction is a plastoquinone + NADPH + (n+1) H(+)(in) = a plastoquinol + NADP(+) + n H(+)(out). NDH shuttles electrons from NAD(P)H:plastoquinone, via FMN and iron-sulfur (Fe-S) centers, to quinones in the photosynthetic chain and possibly in a chloroplast respiratory chain. The immediate electron acceptor for the enzyme in this species is believed to be plastoquinone. Couples the redox reaction to proton translocation, and thus conserves the redox energy in a proton gradient. This is NAD(P)H-quinone oxidoreductase subunit I, chloroplastic from Pentanema britannica (British yellowhead).